The chain runs to 512 residues: Cytochrome P450 1A1 (512 aa).

Positions 29–40 (SRPQVPKGLKNP) are mitochondrial targeting signal. The O-linked (GlcNAc) serine glycan is linked to Ser-67. Phe-224 is a binding site for substrate. Cys-457 serves as a coordination point for heme.

The protein belongs to the cytochrome P450 family. As to quaternary structure, interacts with cytosolic chaperones HSP70 and HSP90; this interaction is required for initial targeting to mitochondria. Interacts (via mitochondrial targeting signal) with TOMM40 (via N-terminus); this interaction is required for translocation across the mitochondrial outer membrane. Requires heme as cofactor. As to expression, lung, lymphocytes and placenta.

The protein localises to the endoplasmic reticulum membrane. It localises to the mitochondrion inner membrane. Its subcellular location is the microsome membrane. The protein resides in the cytoplasm. The catalysed reaction is an organic molecule + reduced [NADPH--hemoprotein reductase] + O2 = an alcohol + oxidized [NADPH--hemoprotein reductase] + H2O + H(+). It carries out the reaction estrone + reduced [NADPH--hemoprotein reductase] + O2 = 2-hydroxyestrone + oxidized [NADPH--hemoprotein reductase] + H2O + H(+). It catalyses the reaction estrone + reduced [NADPH--hemoprotein reductase] + O2 = 4-hydroxyestrone + oxidized [NADPH--hemoprotein reductase] + H2O + H(+). The enzyme catalyses estrone + reduced [NADPH--hemoprotein reductase] + O2 = 6alpha-hydroxyestrone + oxidized [NADPH--hemoprotein reductase] + H2O + H(+). The catalysed reaction is estrone + reduced [NADPH--hemoprotein reductase] + O2 = 15alpha-hydroxyestrone + oxidized [NADPH--hemoprotein reductase] + H2O + H(+). It carries out the reaction estrone + reduced [NADPH--hemoprotein reductase] + O2 = 16alpha-hydroxyestrone + oxidized [NADPH--hemoprotein reductase] + H2O + H(+). It catalyses the reaction 17beta-estradiol + reduced [NADPH--hemoprotein reductase] + O2 = 2-hydroxy-17beta-estradiol + oxidized [NADPH--hemoprotein reductase] + H2O + H(+). The enzyme catalyses 17beta-estradiol + reduced [NADPH--hemoprotein reductase] + O2 = 4-hydroxy-17beta-estradiol + oxidized [NADPH--hemoprotein reductase] + H2O + H(+). The catalysed reaction is 17beta-estradiol + reduced [NADPH--hemoprotein reductase] + O2 = 6alpha-hydroxy-17beta-estradiol + oxidized [NADPH--hemoprotein reductase] + H2O + H(+). It carries out the reaction 17beta-estradiol + reduced [NADPH--hemoprotein reductase] + O2 = 7alpha-hydroxy-17beta-estradiol + oxidized [NADPH--hemoprotein reductase] + H2O + H(+). It catalyses the reaction 17beta-estradiol + reduced [NADPH--hemoprotein reductase] + O2 = 15alpha-hydroxy-17beta-estradiol + oxidized [NADPH--hemoprotein reductase] + H2O + H(+). The enzyme catalyses (5Z,8Z,11Z)-eicosatrienoate + reduced [NADPH--hemoprotein reductase] + O2 = 19-hydroxy-(5Z,8Z,11Z)-eicosatrienoate + oxidized [NADPH--hemoprotein reductase] + H2O + H(+). The catalysed reaction is (5Z,8Z,11Z,14Z)-eicosatetraenoate + reduced [NADPH--hemoprotein reductase] + O2 = 16-hydroxy-(5Z,8Z,11Z,14Z)-eicosatetraenoate + oxidized [NADPH--hemoprotein reductase] + H2O + H(+). It carries out the reaction (5Z,8Z,11Z,14Z)-eicosatetraenoate + reduced [NADPH--hemoprotein reductase] + O2 = 17-hydroxy-(5Z,8Z,11Z,14Z)-eicosatetraenoate + oxidized [NADPH--hemoprotein reductase] + H2O + H(+). It catalyses the reaction (5Z,8Z,11Z,14Z)-eicosatetraenoate + reduced [NADPH--hemoprotein reductase] + O2 = 18-hydroxy-(5Z,8Z,11Z,14Z)-eicosatetraenoate + oxidized [NADPH--hemoprotein reductase] + H2O + H(+). The enzyme catalyses (5Z,8Z,11Z,14Z)-eicosatetraenoate + reduced [NADPH--hemoprotein reductase] + O2 = 19-hydroxy-(5Z,8Z,11Z,14Z)-eicosatetraenoate + oxidized [NADPH--hemoprotein reductase] + H2O + H(+). The catalysed reaction is (5Z,8Z,11Z,14Z,17Z)-eicosapentaenoate + reduced [NADPH--hemoprotein reductase] + O2 = 19-hydroxy-(5Z,8Z,11Z,14Z,17Z)-eicosapentaenoate + oxidized [NADPH--hemoprotein reductase] + H2O + H(+). It carries out the reaction (5Z,8Z,11Z,14Z)-eicosatetraenoate + reduced [NADPH--hemoprotein reductase] + O2 = (8R,9S)-epoxy-(5Z,11Z,14Z)-eicosatrienoate + oxidized [NADPH--hemoprotein reductase] + H2O + H(+). It catalyses the reaction (5Z,8Z,11Z,14Z)-eicosatetraenoate + reduced [NADPH--hemoprotein reductase] + O2 = (11R,12S)-epoxy-(5Z,8Z,14Z)-eicosatrienoate + oxidized [NADPH--hemoprotein reductase] + H2O + H(+). The enzyme catalyses (5Z,8Z,11Z,14Z)-eicosatetraenoate + reduced [NADPH--hemoprotein reductase] + O2 = (14S,15R)-epoxy-(5Z,8Z,11Z)-eicosatrienoate + oxidized [NADPH--hemoprotein reductase] + H2O + H(+). The catalysed reaction is (5Z,8Z,11Z,14Z)-eicosatetraenoate + reduced [NADPH--hemoprotein reductase] + O2 = (14R,15S)-epoxy-(5Z,8Z,11Z)-eicosatrienoate + oxidized [NADPH--hemoprotein reductase] + H2O + H(+). It carries out the reaction (5Z,8Z,11Z,14Z,17Z)-eicosapentaenoate + reduced [NADPH--hemoprotein reductase] + O2 = (17R,18S)-epoxy-(5Z,8Z,11Z,14Z)-eicosatetraenoate + oxidized [NADPH--hemoprotein reductase] + H2O + H(+). It catalyses the reaction (4Z,7Z,10Z,13Z,16Z,19Z)-docosahexaenoate + reduced [NADPH--hemoprotein reductase] + O2 = (19S,20R)-epoxy-(4Z,7Z,10Z,13Z,16Z)-docosapentaenoate + oxidized [NADPH--hemoprotein reductase] + H2O + H(+). The enzyme catalyses (4Z,7Z,10Z,13Z,16Z,19Z)-docosahexaenoate + reduced [NADPH--hemoprotein reductase] + O2 = (19R,20S)-epoxy-(4Z,7Z,10Z,13Z,16Z)-docosapentaenoate + oxidized [NADPH--hemoprotein reductase] + H2O + H(+). The catalysed reaction is all-trans-retinol + reduced [NADPH--hemoprotein reductase] + O2 = all-trans-retinal + oxidized [NADPH--hemoprotein reductase] + 2 H2O + H(+). It carries out the reaction all-trans-retinal + reduced [NADPH--hemoprotein reductase] + O2 = all-trans-retinoate + oxidized [NADPH--hemoprotein reductase] + H2O + 2 H(+). It catalyses the reaction (13S)-hydroperoxy-(9Z,11E)-octadecadienoate = 13-oxo-(9Z,11E)-octadecadienoate + H2O. The enzyme catalyses (12S)-hydroperoxy-(5Z,8Z,10E,14Z)-eicosatetraenoate = 12-oxo-(5Z,8Z,10E,14Z)-eicosatetraenoate + H2O. The catalysed reaction is (15S)-hydroperoxy-(5Z,8Z,11Z,13E)-eicosatetraenoate = 15-oxo-(5Z,8Z,11Z,13E)-eicosatetraenoate + H2O. It carries out the reaction (5S)-hydroperoxy-(6E,8Z,11Z,14Z)-eicosatetraenoate = 5-oxo-(6E,8Z,11Z,14Z)-eicosatetraenoate + H2O. The protein operates within steroid hormone biosynthesis. It participates in lipid metabolism; fatty acid metabolism. Its pathway is cofactor metabolism; retinol metabolism. Its function is as follows. A cytochrome P450 monooxygenase involved in the metabolism of various endogenous substrates, including fatty acids, steroid hormones and vitamins. Mechanistically, uses molecular oxygen inserting one oxygen atom into a substrate, and reducing the second into a water molecule, with two electrons provided by NADPH via cytochrome P450 reductase (NADPH--hemoprotein reductase). Catalyzes the hydroxylation of carbon-hydrogen bonds. Exhibits high catalytic activity for the formation of hydroxyestrogens from estrone (E1) and 17beta-estradiol (E2), namely 2-hydroxy E1 and E2, as well as D-ring hydroxylated E1 and E2 at the C15-alpha and C16-alpha positions. Displays different regioselectivities for polyunsaturated fatty acids (PUFA) hydroxylation. Catalyzes the epoxidation of double bonds of certain PUFA. Converts arachidonic acid toward epoxyeicosatrienoic acid (EET) regioisomers, 8,9-, 11,12-, and 14,15-EET, that function as lipid mediators in the vascular system. Displays an absolute stereoselectivity in the epoxidation of eicosapentaenoic acid (EPA) producing the 17(R),18(S) enantiomer. May play an important role in all-trans retinoic acid biosynthesis in extrahepatic tissues. Catalyzes two successive oxidative transformation of all-trans retinol to all-trans retinal and then to the active form all-trans retinoic acid. May also participate in eicosanoids metabolism by converting hydroperoxide species into oxo metabolites (lipoxygenase-like reaction, NADPH-independent). The sequence is that of Cytochrome P450 1A1 from Homo sapiens (Human).